The primary structure comprises 64 residues: Conotoxin Ca5.3 (64 aa).

The N-terminal stretch at 1 to 22 (MRCVPVFIILLLLIASAPGVDA) is a signal peptide. A propeptide spanning residues 23–48 (QPKTKYNAPLTSLHDNAKGILQEHWN) is cleaved from the precursor. Isoleucine amide is present on I61.

It belongs to the conotoxin T superfamily. In terms of processing, contains 2 disulfide bonds that can be either 'C1-C3, C2-C4' or 'C1-C4, C2-C3', since these disulfide connectivities have been observed for conotoxins with cysteine framework V (for examples, see AC P0DQQ7 and AC P81755). In terms of tissue distribution, expressed by the venom duct.

Its subcellular location is the secreted. The polypeptide is Conotoxin Ca5.3 (Conus caracteristicus (Characteristic cone)).